The primary structure comprises 166 residues: Ubiquitin-fold modifier-conjugating enzyme 1 (166 aa).

Cys116 serves as the catalytic Glycyl thioester intermediate.

It belongs to the ubiquitin-conjugating enzyme family. UFC1 subfamily.

Its function is as follows. E2-like enzyme which forms an intermediate with UFM1 via a thioester linkage. The sequence is that of Ubiquitin-fold modifier-conjugating enzyme 1 from Monosiga brevicollis (Choanoflagellate).